Consider the following 131-residue polypeptide: Small ribosomal subunit protein uS8 (131 aa).

Belongs to the universal ribosomal protein uS8 family. As to quaternary structure, part of the 30S ribosomal subunit. Contacts proteins S5 and S12.

One of the primary rRNA binding proteins, it binds directly to 16S rRNA central domain where it helps coordinate assembly of the platform of the 30S subunit. In Paraburkholderia xenovorans (strain LB400), this protein is Small ribosomal subunit protein uS8.